Consider the following 309-residue polypeptide: Low-density lipoprotein receptor-related protein 1 (309 aa).

Belongs to the LDLR family.

It is found in the endoplasmic reticulum. The protein resides in the golgi apparatus. Its subcellular location is the endosome. Its function is as follows. Involved in endocytosis, fatty acid beta-oxidation and infectious growth. Plays a critical role in the accumulation of MSN2 from the cytosol to the nucleus by activating the cyclic AMP signaling pathway. MSN2 can then target the dienoyl-coenzyme A isomerase DCI1 and other genes involved in fatty acid beta-oxidation, which is important for lipid droplets degradation and infectious growth. The chain is Low-density lipoprotein receptor-related protein 1 from Pyricularia oryzae (strain 70-15 / ATCC MYA-4617 / FGSC 8958) (Rice blast fungus).